We begin with the raw amino-acid sequence, 362 residues long: D-alanine--D-alanine ligase (362 aa).

The ATP-grasp domain occupies 134-345 (KILAQRAGVP…YPDLITRLIR (212 aa)). Residue 170 to 225 (GQLGTSNLFVKPSNQGSSVGITHVTDDSNYAEALAEAFKYDDKVLVEEGIVGTEVE) coordinates ATP. 3 residues coordinate Mg(2+): D298, E312, and N314.

It belongs to the D-alanine--D-alanine ligase family. Mg(2+) is required as a cofactor. Requires Mn(2+) as cofactor.

It is found in the cytoplasm. The catalysed reaction is 2 D-alanine + ATP = D-alanyl-D-alanine + ADP + phosphate + H(+). It functions in the pathway cell wall biogenesis; peptidoglycan biosynthesis. Functionally, cell wall formation. In Lactobacillus delbrueckii subsp. bulgaricus (strain ATCC BAA-365 / Lb-18), this protein is D-alanine--D-alanine ligase.